The following is a 346-amino-acid chain: Hydroxyproline O-galactosyltransferase HPGT3 (346 aa).

Positions 1-10 (MESLPTTVPS) are enriched in polar residues. A disordered region spans residues 1–21 (MESLPTTVPSKSERRARSSKF). Residues 1–28 (MESLPTTVPSKSERRARSSKFSQSSSKP) are Cytoplasmic-facing. The chain crosses the membrane as a helical; Signal-anchor for type II membrane protein span at residues 29-45 (SVIMAFFSCVAWLYVAG). Topologically, residues 46–346 (RLWQDAENRV…IRQDKVCSVA (301 aa)) are lumenal.

The protein belongs to the glycosyltransferase 31 family. Mn(2+) serves as cofactor. As to expression, expressed in roots, rosette leaves, cauline leaves, stems, flowers and siliques.

The protein resides in the golgi apparatus membrane. The protein operates within protein modification; protein glycosylation. Its function is as follows. Possesses hydroxyproline O-galactosyltransferase activity. Transfers galactose from UDP-galactose to hydroxyproline residues in the arabinogalactan proteins (AGPs). Is specific for AGPs containing non-contiguous peptidyl hydroxyproline residues. The addition of galactose onto the peptidyl hydroxyproline residues in AGP core proteins represents the first committed step in arabinogalactan polysaccharide addition. AGP glycans play essential roles in both vegetative and reproductive plant growth. The chain is Hydroxyproline O-galactosyltransferase HPGT3 from Arabidopsis thaliana (Mouse-ear cress).